The chain runs to 439 residues: Homogentisate 1,2-dioxygenase (439 aa).

The active-site Proton acceptor is the His289. Positions 332 and 338 each coordinate Fe cation. Residues Tyr347 and His368 each contribute to the homogentisate site. His368 serves as a coordination point for Fe cation.

Belongs to the homogentisate dioxygenase family. Hexamer; dimer of trimers. The cofactor is Fe cation.

The catalysed reaction is homogentisate + O2 = 4-maleylacetoacetate + H(+). It functions in the pathway amino-acid degradation; L-phenylalanine degradation; acetoacetate and fumarate from L-phenylalanine: step 4/6. In terms of biological role, involved in the catabolism of homogentisate (2,5-dihydroxyphenylacetate or 2,5-OH-PhAc), a central intermediate in the degradation of phenylalanine and tyrosine. Catalyzes the oxidative ring cleavage of the aromatic ring of homogentisate to yield maleylacetoacetate. The chain is Homogentisate 1,2-dioxygenase from Xanthomonas euvesicatoria pv. vesicatoria (strain 85-10) (Xanthomonas campestris pv. vesicatoria).